Consider the following 364-residue polypeptide: MDNRHLALYPFVTEASEYVGSLGFSPDKLLSSRALESARIRGRERVIQALEGEIEKPSPSSSEEGKILTELLSYPFSRILVSCIDDPFLTRKYALAEAKAAYHLLKTQQPEFLQDLATDFRINAEIYENPETHDIFFDLHFTDYIKLASPLKDLNWKLVNRKMKKGYVKISKEELARLLQEAIRLRIQNSLPVTVPKEICEACIPHTDTISEELEKKKTEFGVGEFQRVESDLFPPCITQAIANVRAGVNLAHSMRFAMTSFLINIGMSVDEVVAMFNISPDFDEEKTRYQIEHIAGTSSGTTYKPPSCNTMRTYGNCSAPDELCKGVKHPLGYYSRRVWVKNRMQNDNEKGHEEKKEGETPPQ.

Residues Cys237, Cys309, Cys318, and Cys325 each coordinate [4Fe-4S] cluster. Positions 345–364 (MQNDNEKGHEEKKEGETPPQ) are disordered.

Belongs to the eukaryotic-type primase large subunit family. In terms of assembly, heterodimer of a small subunit (PriS) and a large subunit (PriL). [4Fe-4S] cluster serves as cofactor.

In terms of biological role, regulatory subunit of DNA primase, an RNA polymerase that catalyzes the synthesis of short RNA molecules used as primers for DNA polymerase during DNA replication. Stabilizes and modulates the activity of the small subunit, increasing the rate of DNA synthesis, and conferring RNA synthesis capability. The DNA polymerase activity may enable DNA primase to also catalyze primer extension after primer synthesis. May also play a role in DNA repair. The protein is DNA primase large subunit PriL of Methanococcoides burtonii (strain DSM 6242 / NBRC 107633 / OCM 468 / ACE-M).